The following is a 707-amino-acid chain: Pheromone-processing carboxypeptidase KEX1 (707 aa).

Positions 1-17 are cleaved as a signal peptide; the sequence is MLLSVFIILINTLFVLA. Residues 18 to 564 lie on the Lumenal side of the membrane; it reads IPPKEGSDNN…EESTSSKFTR (547 aa). Residues Asn64 and Asn121 are each glycosylated (N-linked (GlcNAc...) asparagine). Ser183 is a catalytic residue. Residues Asn293 and Asn378 are each glycosylated (N-linked (GlcNAc...) asparagine). The active site involves Asp393. N-linked (GlcNAc...) asparagine glycosylation is found at Asn440 and Asn448. His451 is an active-site residue. Residues 496-557 are disordered; it reads GQEIPADESS…ASFIPEPEES (62 aa). The span at 503-533 shows a compositional bias: basic and acidic residues; that stretch reads ESSKPIEDKPDDKPIEDKPEETKPEQTKPED. Over residues 536–549 the composition is skewed to low complexity; that stretch reads SSSTSEIIPTSEAS. The chain crosses the membrane as a helical span at residues 565–585; it reads LIQLGVIFIIFWGVYILYVSY. Residues 586–707 lie on the Cytoplasmic side of the membrane; the sequence is RARPSSIIKK…GNPKKTESKS (122 aa). The tract at residues 644 to 707 is disordered; it reads NTSNRGRYAP…GNPKKTESKS (64 aa). Over residues 683–694 the composition is skewed to acidic residues; sequence SDDDEDDDEDVE. Residues 695–707 show a composition bias toward basic and acidic residues; the sequence is THEGNPKKTESKS.

This sequence belongs to the peptidase S10 family.

The protein resides in the golgi apparatus. It localises to the trans-Golgi network membrane. It catalyses the reaction Preferential release of a C-terminal arginine or lysine residue.. In terms of biological role, protease with a carboxypeptidase B-like function involved in the C-terminal processing of the lysine and arginine residues from protein precursors. Promotes cell fusion and is involved in the programmed cell death. The polypeptide is Pheromone-processing carboxypeptidase KEX1 (KEX1) (Candida tropicalis (strain ATCC MYA-3404 / T1) (Yeast)).